The sequence spans 287 residues: Nucleotide-binding protein GM21_3387 (287 aa).

ATP is bound at residue 8–15 (GLSGSGKS). 59 to 62 (DIRS) serves as a coordination point for GTP.

Belongs to the RapZ-like family.

Its function is as follows. Displays ATPase and GTPase activities. This Geobacter sp. (strain M21) protein is Nucleotide-binding protein GM21_3387.